The following is a 206-amino-acid chain: Phosphoserine phosphatase (206 aa).

Asp-7 serves as the catalytic Nucleophile. Residues Asp-7 and Asp-9 each contribute to the Mg(2+) site. Catalysis depends on Asp-9, which acts as the Proton donor. Residues Glu-16, Arg-52, 95–96 (SG), and Lys-140 contribute to the substrate site. Mg(2+) is bound at residue Asp-163. Substrate is bound at residue Asn-166.

Belongs to the HAD-like hydrolase superfamily. SerB family. Mg(2+) is required as a cofactor.

It carries out the reaction O-phospho-L-serine + H2O = L-serine + phosphate. It catalyses the reaction O-phospho-D-serine + H2O = D-serine + phosphate. It functions in the pathway amino-acid biosynthesis; L-serine biosynthesis; L-serine from 3-phospho-D-glycerate: step 3/3. The polypeptide is Phosphoserine phosphatase (Wolinella succinogenes (strain ATCC 29543 / DSM 1740 / CCUG 13145 / JCM 31913 / LMG 7466 / NCTC 11488 / FDC 602W) (Vibrio succinogenes)).